A 193-amino-acid chain; its full sequence is Potassium-transporting ATPase KdpC subunit (193 aa).

A helical transmembrane segment spans residues 14–34; that stretch reads ITFTFLVLCGLVYPLIVTGIA.

This sequence belongs to the KdpC family. The system is composed of three essential subunits: KdpA, KdpB and KdpC.

The protein localises to the cell membrane. Part of the high-affinity ATP-driven potassium transport (or Kdp) system, which catalyzes the hydrolysis of ATP coupled with the electrogenic transport of potassium into the cytoplasm. This subunit acts as a catalytic chaperone that increases the ATP-binding affinity of the ATP-hydrolyzing subunit KdpB by the formation of a transient KdpB/KdpC/ATP ternary complex. The chain is Potassium-transporting ATPase KdpC subunit from Bacillus cereus (strain AH820).